The primary structure comprises 533 residues: UDP-glucuronosyltransferase 1-2 (533 aa).

Residues 1 to 27 (MDTGLCVPLRGISGLLLLLCALPWAEG) form the signal peptide. Residues asparagine 141, asparagine 295, and asparagine 433 are each glycosylated (N-linked (GlcNAc...) asparagine). A helical membrane pass occupies residues 491-511 (VIGFLLAIVLTVVFIVFKCCA).

The protein belongs to the UDP-glycosyltransferase family. As to expression, expressed in kidney.

The protein resides in the microsome. It is found in the endoplasmic reticulum membrane. It carries out the reaction glucuronate acceptor + UDP-alpha-D-glucuronate = acceptor beta-D-glucuronoside + UDP + H(+). In terms of biological role, UDPGT is of major importance in the conjugation and subsequent elimination of potentially toxic xenobiotics and endogenous compounds. In Mus musculus (Mouse), this protein is UDP-glucuronosyltransferase 1-2 (Ugt1a2).